The sequence spans 124 residues: UPF0738 protein ABC2521 (124 aa).

This sequence belongs to the UPF0738 family.

The chain is UPF0738 protein ABC2521 from Shouchella clausii (strain KSM-K16) (Alkalihalobacillus clausii).